The primary structure comprises 481 residues: Aspartyl/glutamyl-tRNA(Asn/Gln) amidotransferase subunit B (481 aa).

This sequence belongs to the GatB/GatE family. GatB subfamily. Heterotrimer of A, B and C subunits.

The enzyme catalyses L-glutamyl-tRNA(Gln) + L-glutamine + ATP + H2O = L-glutaminyl-tRNA(Gln) + L-glutamate + ADP + phosphate + H(+). The catalysed reaction is L-aspartyl-tRNA(Asn) + L-glutamine + ATP + H2O = L-asparaginyl-tRNA(Asn) + L-glutamate + ADP + phosphate + 2 H(+). Its function is as follows. Allows the formation of correctly charged Asn-tRNA(Asn) or Gln-tRNA(Gln) through the transamidation of misacylated Asp-tRNA(Asn) or Glu-tRNA(Gln) in organisms which lack either or both of asparaginyl-tRNA or glutaminyl-tRNA synthetases. The reaction takes place in the presence of glutamine and ATP through an activated phospho-Asp-tRNA(Asn) or phospho-Glu-tRNA(Gln). This is Aspartyl/glutamyl-tRNA(Asn/Gln) amidotransferase subunit B from Teredinibacter turnerae (strain ATCC 39867 / T7901).